We begin with the raw amino-acid sequence, 4042 residues long: Polyketide synthase-nonribosomal peptide synthetase ffsA (4042 aa).

The 437-residue stretch at 17–453 (REPIAIVGSA…GANAHAILEA (437 aa)) folds into the Ketosynthase family 3 (KS3) domain. Catalysis depends on for beta-ketoacyl synthase activity residues Cys190, His330, and His373. The malonyl-CoA:ACP transacylase (MAT) domain stretch occupies residues 561–878 (VFTGQGAQWK…TGLLSRGRPD (318 aa)). Residues 950–1083 (HEILGTKCPD…GKLKVTLGEP (134 aa)) form an N-terminal hotdog fold region. Residues 950 to 1249 (HEILGTKCPD…LQTKPLANAT (300 aa)) are dehydratase (DH) domain. Positions 950–1251 (HEILGTKCPD…TKPLANATAA (302 aa)) constitute a PKS/mFAS DH domain. Catalysis depends on His982, which acts as the Proton acceptor; for dehydratase activity. Residues 1098 to 1251 (MIDVDSERFY…TKPLANATAA (154 aa)) are C-terminal hotdog fold. The active-site Proton donor; for dehydratase activity is Asp1158. The interval 1390 to 1613 (DNLLNDFYVH…VDDHVNFLRD (224 aa)) is methyltransferase (MT) domain. Residues 2116–2289 (TYWLVGLSGG…AGSAINIGTI (174 aa)) are ketoreductase (KR)domain. The 78-residue stretch at 2399–2476 (EAREIIEESL…EMVAAAQEKL (78 aa)) folds into the Carrier 1 domain. Ser2436 is modified (O-(pantetheine 4'-phosphoryl)serine). The tract at residues 2515 to 2601 (EKAEYADFDD…FDSDSDNASI (87 aa)) is disordered. The segment covering 2520 to 2532 (ADFDDENEEEGIP) has biased composition (acidic residues). The condensation stretch occupies residues 2629 to 3061 (RTLPMSFGQT…ISRPSLYDPQ (433 aa)). An adenylation region spans residues 3089 to 3486 (EIVKAHGSKV…EDGHLVLEGR (398 aa)). In terms of domain architecture, Carrier 2 spans 3607 to 3684 (RDSTEKLKDI…AMARMVDPTA (78 aa)). An O-(pantetheine 4'-phosphoryl)serine modification is found at Ser3644. The segment at 3750-3971 (ITGATGFLGK…DFVDVEKVAT (222 aa)) is reductase-like domain.

In the C-terminal section; belongs to the NRP synthetase family.

Its pathway is mycotoxin biosynthesis. Hybrid PKS-NRPS synthetase; part of the gene cluster that mediates the biosynthesis of the cytotoxic leucine-containing cytochalasans, including aspochalasin C, aspochalasin E, TMC-169, flavichalasine F, aspergillin PZ, aspochalasin M and flavichalasine G. The first step in the pathway is catalyzed by the hybrid PKS-NRPS ffsA that utilizes 8 units of malonyl-CoA to iteratively assemble the octaketide chain before addition of L-leucine by the C-terminal NRPS modules. Because ffsA lacks a designated enoylreductase (ER) domain, the required activity is provided the enoyl reductase fssC. The methyltransferase (MT) domain of ffsA catalyzes the alpha-methylation at C10 and C14 using S-adenosyl-L-methionine as the methyl-donating cosubstrate. Reduction by the hydrolyase ffsE, followed by dehydration and intra-molecular Diels-Alder cyclization by the Diels-Alderase ffsF then yield the required isoindolone-fused macrocycle. A number of oxidative steps catalyzed by the tailoring cytochrome P450 monooxygenase ffsD, the FAD-linked oxidoreductase ffsJ and the short-chain dehydrogenase/reductase ffsI, are further required to afford the final products. The protein is Polyketide synthase-nonribosomal peptide synthetase ffsA of Aspergillus flavipes.